A 591-amino-acid chain; its full sequence is Putative BTB/POZ domain-containing protein At5g13600 (591 aa).

Positions 28-95 constitute a BTB domain; it reads PDVMIQVVDE…CYGVRIEVTP (68 aa). Residues 208–493 form the NPH3 domain; that stretch reads NWWFNDVSSF…VQVLFFEQMR (286 aa). Tyrosine 434 carries the phosphotyrosine modification.

It belongs to the NPH3 family.

It participates in protein modification; protein ubiquitination. May act as a substrate-specific adapter of an E3 ubiquitin-protein ligase complex (CUL3-RBX1-BTB) which mediates the ubiquitination and subsequent proteasomal degradation of target proteins. The polypeptide is Putative BTB/POZ domain-containing protein At5g13600 (Arabidopsis thaliana (Mouse-ear cress)).